The primary structure comprises 508 residues: Photosystem II CP47 reaction center protein (508 aa).

A run of 6 helical transmembrane segments spans residues 21 to 36 (AVHIMHTALVAGWAGS), 101 to 115 (IVFSGLCFLAAIWHW), 140 to 156 (GIHLFLSGVACFGFGAF), 203 to 218 (IAAGTLGILAGLFHLS), 237 to 252 (VLSSSIAAVFFAAFVV), and 457 to 472 (SFALLFFFGHIWHGAR).

The protein belongs to the PsbB/PsbC family. PsbB subfamily. In terms of assembly, PSII is composed of 1 copy each of membrane proteins PsbA, PsbB, PsbC, PsbD, PsbE, PsbF, PsbH, PsbI, PsbJ, PsbK, PsbL, PsbM, PsbT, PsbX, PsbY, PsbZ, Psb30/Ycf12, at least 3 peripheral proteins of the oxygen-evolving complex and a large number of cofactors. It forms dimeric complexes. Requires Binds multiple chlorophylls. PSII binds additional chlorophylls, carotenoids and specific lipids. as cofactor.

The protein localises to the plastid. It localises to the chloroplast thylakoid membrane. Functionally, one of the components of the core complex of photosystem II (PSII). It binds chlorophyll and helps catalyze the primary light-induced photochemical processes of PSII. PSII is a light-driven water:plastoquinone oxidoreductase, using light energy to abstract electrons from H(2)O, generating O(2) and a proton gradient subsequently used for ATP formation. This Buxus microphylla (Littleleaf boxwood) protein is Photosystem II CP47 reaction center protein.